The chain runs to 466 residues: ATP synthase subunit beta (466 aa).

152–159 (GGAGVGKT) serves as a coordination point for ATP.

Belongs to the ATPase alpha/beta chains family. In terms of assembly, F-type ATPases have 2 components, CF(1) - the catalytic core - and CF(0) - the membrane proton channel. CF(1) has five subunits: alpha(3), beta(3), gamma(1), delta(1), epsilon(1). CF(0) has three main subunits: a(1), b(2) and c(9-12). The alpha and beta chains form an alternating ring which encloses part of the gamma chain. CF(1) is attached to CF(0) by a central stalk formed by the gamma and epsilon chains, while a peripheral stalk is formed by the delta and b chains.

It is found in the cell inner membrane. The enzyme catalyses ATP + H2O + 4 H(+)(in) = ADP + phosphate + 5 H(+)(out). Produces ATP from ADP in the presence of a proton gradient across the membrane. The catalytic sites are hosted primarily by the beta subunits. In Helicobacter pylori (strain HPAG1), this protein is ATP synthase subunit beta.